Consider the following 122-residue polypeptide: uncharacterized protein (122 aa).

Its subcellular location is the plastid. This is an uncharacterized protein from Euglena longa (Euglenophycean alga).